Consider the following 231-residue polypeptide: Sugar fermentation stimulation protein homolog (231 aa).

The protein belongs to the SfsA family.

The polypeptide is Sugar fermentation stimulation protein homolog (Syntrophotalea carbinolica (strain DSM 2380 / NBRC 103641 / GraBd1) (Pelobacter carbinolicus)).